We begin with the raw amino-acid sequence, 131 residues long: Putative gamma-taxilin 2 (131 aa).

The protein belongs to the taxilin family. Ubiquitously expressed.

In Homo sapiens (Human), this protein is Putative gamma-taxilin 2 (TXLNGY).